The chain runs to 185 residues: Elongation factor P (185 aa).

Belongs to the elongation factor P family.

It is found in the cytoplasm. It functions in the pathway protein biosynthesis; polypeptide chain elongation. Its function is as follows. Involved in peptide bond synthesis. Stimulates efficient translation and peptide-bond synthesis on native or reconstituted 70S ribosomes in vitro. Probably functions indirectly by altering the affinity of the ribosome for aminoacyl-tRNA, thus increasing their reactivity as acceptors for peptidyl transferase. The protein is Elongation factor P of Burkholderia lata (strain ATCC 17760 / DSM 23089 / LMG 22485 / NCIMB 9086 / R18194 / 383).